A 501-amino-acid polypeptide reads, in one-letter code: MKKRALISVFDKDGVLELAKFLRDRDVEIISSGGTYKYLKENNIEVKEISEITDFPEMLDGRVKTLHPLVHAGILAIRDNKEHMKTLEEREINTIDYVVVNLYPFFEKVRENLSFEEKVEFIDIGGPTMLRAAAKNFKDVVVLSDKKDYEKVMNEIKENNCVSFKLRKTLAGKVFNLMSAYDAAISNFLLEGEEEYPEYLSVSYKKIQDLRYGENPHQGAAYYSSTEFDGAMNSFEILNGKALSYNNIKDLDIAWKVACEFEETACCALKHNTPCGVAVGENSKEVYLKAYDADPVSIFGGIVAINRKIDKATAEEMVKIFLEVVAAPDFDEDALEVLRTKKNLRVIKCKNTPQAKNYMVTVDGGILVQGEDNKLANEYKVVTEKEPTEMELRDMIFGMKVVKYVKSNAIVVVKDGVATGIGGGQVNRIWATKEALERGKGGAVLASDAFFPFRDCVDEAAKNGIKAIIQPGGSIRDEESIEACNEHGISMVFTGVRHFKH.

In terms of domain architecture, MGS-like spans 1-144; it reads MKKRALISVF…KNFKDVVVLS (144 aa).

Belongs to the PurH family.

It catalyses the reaction (6R)-10-formyltetrahydrofolate + 5-amino-1-(5-phospho-beta-D-ribosyl)imidazole-4-carboxamide = 5-formamido-1-(5-phospho-D-ribosyl)imidazole-4-carboxamide + (6S)-5,6,7,8-tetrahydrofolate. The catalysed reaction is IMP + H2O = 5-formamido-1-(5-phospho-D-ribosyl)imidazole-4-carboxamide. Its pathway is purine metabolism; IMP biosynthesis via de novo pathway; 5-formamido-1-(5-phospho-D-ribosyl)imidazole-4-carboxamide from 5-amino-1-(5-phospho-D-ribosyl)imidazole-4-carboxamide (10-formyl THF route): step 1/1. It participates in purine metabolism; IMP biosynthesis via de novo pathway; IMP from 5-formamido-1-(5-phospho-D-ribosyl)imidazole-4-carboxamide: step 1/1. The chain is Bifunctional purine biosynthesis protein PurH from Clostridium perfringens (strain ATCC 13124 / DSM 756 / JCM 1290 / NCIMB 6125 / NCTC 8237 / Type A).